The following is an 84-amino-acid chain: uncharacterized protein (84 aa).

This is an uncharacterized protein from Vaccinia virus (strain Copenhagen) (VACV).